The primary structure comprises 806 residues: Leucine--tRNA ligase (806 aa).

The 'HIGH' region motif lies at 38 to 48 (PYPSGEIHMGH). Positions 572–576 (KMSKS) match the 'KMSKS' region motif. An ATP-binding site is contributed by Lys-575.

Belongs to the class-I aminoacyl-tRNA synthetase family.

The protein resides in the cytoplasm. The enzyme catalyses tRNA(Leu) + L-leucine + ATP = L-leucyl-tRNA(Leu) + AMP + diphosphate. This Helicobacter pylori (strain HPAG1) protein is Leucine--tRNA ligase.